We begin with the raw amino-acid sequence, 55 residues long: Beta-toxin Cn7 (55 aa).

The region spanning 1–55 is the LCN-type CS-alpha/beta domain; the sequence is KEGYIVNYHDGCKYECYKLGDNDYCLRECKLRVGKGAGGYCYAFACWCTHLYEQA. Intrachain disulfides connect C16-C41, C25-C46, and C29-C48.

Belongs to the long (3 C-C) scorpion toxin superfamily. Sodium channel inhibitor family. Beta subfamily. As to expression, expressed by the venom gland.

Its subcellular location is the secreted. Beta toxins bind voltage-independently at site-4 of sodium channels (Nav) and shift the voltage of activation toward more negative potentials thereby affecting sodium channel activation and promoting spontaneous and repetitive firing. The protein is Beta-toxin Cn7 of Centruroides noxius (Mexican scorpion).